Reading from the N-terminus, the 906-residue chain is Protein translocase subunit SecA (906 aa).

Residues Gln87, 105–109 (GEGKT), and Asp507 contribute to the ATP site. The span at 553–563 (RHESRRIDNQL) shows a compositional bias: basic and acidic residues. Disordered stretches follow at residues 553–576 (RHES…PGSS) and 854–906 (LEEP…GRLA). The Zn(2+) site is built by Cys890, Cys892, Cys901, and His902. Over residues 896–906 (KKYKQCHGRLA) the composition is skewed to basic residues.

It belongs to the SecA family. In terms of assembly, monomer and homodimer. Part of the essential Sec protein translocation apparatus which comprises SecA, SecYEG and auxiliary proteins SecDF-YajC and YidC. Zn(2+) serves as cofactor.

The protein resides in the cell inner membrane. It localises to the cytoplasm. It catalyses the reaction ATP + H2O + cellular proteinSide 1 = ADP + phosphate + cellular proteinSide 2.. Part of the Sec protein translocase complex. Interacts with the SecYEG preprotein conducting channel. Has a central role in coupling the hydrolysis of ATP to the transfer of proteins into and across the cell membrane, serving both as a receptor for the preprotein-SecB complex and as an ATP-driven molecular motor driving the stepwise translocation of polypeptide chains across the membrane. In Methylococcus capsulatus (strain ATCC 33009 / NCIMB 11132 / Bath), this protein is Protein translocase subunit SecA.